Consider the following 585-residue polypeptide: A-type ATP synthase subunit A (585 aa).

Position 231-238 (231-238 (GPFGSGKT)) interacts with ATP.

This sequence belongs to the ATPase alpha/beta chains family. Has multiple subunits with at least A(3), B(3), C, D, E, F, H, I and proteolipid K(x).

It localises to the cell membrane. It catalyses the reaction ATP + H2O + 4 H(+)(in) = ADP + phosphate + 5 H(+)(out). Functionally, component of the A-type ATP synthase that produces ATP from ADP in the presence of a proton gradient across the membrane. The A chain is the catalytic subunit. This Desulfurococcus sp. (strain SY) protein is A-type ATP synthase subunit A.